A 231-amino-acid polypeptide reads, in one-letter code: NifU-like protein 1, chloroplastic (231 aa).

The transit peptide at 1-69 directs the protein to the chloroplast; the sequence is MMASLATSIS…SSQGEKISPL (69 aa).

This sequence belongs to the NifU family. Homodimer; disulfide-linked. In terms of tissue distribution, predominantly expressed in floral stalks and siliques. Expressed in leaves, cauline leaves, flower stalks and flowers (at protein level).

It is found in the plastid. Its subcellular location is the chloroplast stroma. Its function is as follows. Molecular scaffold for [Fe-S] cluster assembly of chloroplastic iron-sulfur proteins. This chain is NifU-like protein 1, chloroplastic (NIFU1), found in Arabidopsis thaliana (Mouse-ear cress).